A 233-amino-acid polypeptide reads, in one-letter code: Superoxide dismutase [Mn], mitochondrial (233 aa).

The N-terminal 27 residues, 1 to 27 (MALRSLVTRKNLPSAFKAATGLGQLRG), are a transit peptide targeting the mitochondrion. His-55, His-103, Asp-192, and His-196 together coordinate Mn(2+).

It belongs to the iron/manganese superoxide dismutase family. In terms of assembly, homotetramer. Mn(2+) is required as a cofactor. As to expression, present in all tissues examined (leaf, petiole, root, latex, callus) with young leaves showing the highest levels in intact plants.

It is found in the mitochondrion matrix. The enzyme catalyses 2 superoxide + 2 H(+) = H2O2 + O2. Functionally, destroys superoxide anion radicals which are normally produced within the cells and which are toxic to biological systems. In Hevea brasiliensis (Para rubber tree), this protein is Superoxide dismutase [Mn], mitochondrial (SODA).